The following is a 342-amino-acid chain: MTDISERNKLILEAIIEDYITTAEPVGSRAVTKRHGLTLSPATVRNVMADLEEMGYLVSPHTSAGRVPTDKAYRLYVDSLLAVRRIDKVERERIRKRYAEAGRDIGAVLHETSRLLSSVSHYTGIVLAPRFSATIFRHIEFVKLGGRRILVILVADNGTVQNRLIESDEEFSSEELIRMSNYLNELLVGVPVGQVRTRILEEMRNEKVLYDKLLARALQLSEQSLNDDGAQIFIEGQTNILEQPEFADSRRMRDLFRAFEEKNQLVGLLDRCLNAQGVQIFIGAETHLSQMEGLSIITSTYLTGKNTLGVLGVIGPTRMGYAKVIPIVDYTAKLVSRLLEGE.

The protein belongs to the HrcA family.

Functionally, negative regulator of class I heat shock genes (grpE-dnaK-dnaJ and groELS operons). Prevents heat-shock induction of these operons. This Geobacter sulfurreducens (strain ATCC 51573 / DSM 12127 / PCA) protein is Heat-inducible transcription repressor HrcA.